The sequence spans 285 residues: HTH-type transcriptional regulator YofA (285 aa).

The region spanning 1 to 58 is the HTH lysR-type domain; sequence MESGDLKIFQAVAREGSITKAAQMLNYVQSNVTARVHNLEEDLNIRLFHRTNRGMKLT. A DNA-binding region (H-T-H motif) is located at residues 18-37; that stretch reads ITKAAQMLNYVQSNVTARVH.

It belongs to the LysR transcriptional regulatory family.

It is found in the cytoplasm. Functionally, regulates expression of the cell division protein ftsW, and is essential for cell viability during stationary phase. The chain is HTH-type transcriptional regulator YofA (yofA) from Bacillus subtilis (strain 168).